The primary structure comprises 109 residues: ATP-dependent Clp protease adapter protein ClpS (109 aa).

The segment at 1–23 is disordered; the sequence is MTERKHDDTGVEEGTGLATKTRP.

This sequence belongs to the ClpS family. Binds to the N-terminal domain of the chaperone ClpA.

Involved in the modulation of the specificity of the ClpAP-mediated ATP-dependent protein degradation. In Maricaulis maris (strain MCS10) (Caulobacter maris), this protein is ATP-dependent Clp protease adapter protein ClpS.